The primary structure comprises 92 residues: MAKRTKKVGITGKYGVRYGSSLRRQVKKLEVQQHARYDCSFCGKKTVRRGAAGIWSCHSCKKTVAGGAYTVSTAAAATVRSTIRRLRDMVEA.

A C4-type zinc finger spans residues 39–60; sequence CSFCGKKTVRRGAAGIWSCHSC.

This sequence belongs to the eukaryotic ribosomal protein eL43 family.

The sequence is that of Large ribosomal subunit protein eL43 (RPL43) from Candida glabrata (strain ATCC 2001 / BCRC 20586 / JCM 3761 / NBRC 0622 / NRRL Y-65 / CBS 138) (Yeast).